The following is a 113-amino-acid chain: Transcriptional regulator RamA (113 aa).

The HTH araC/xylS-type domain occupies 9–107 (DTIVEWIDDN…NLPPGAYRKE (99 aa)). DNA-binding regions (H-T-H motif) lie at residues 26–47 (DDIARHAGYSKWHLQRLFMQYK) and 74–97 (VYDICLKYGFDSQQTFTRIFTRTF).

In terms of biological role, transcriptional regulator. Binds to regulatory regions of target genes, including efflux pump operon acrAB and outer membrane protein gene tolC. Represses transcription of genes belonging to the flagellar regulon, including flhD, flhB and fliC; probably thereby leading to repression of motility. Represses expression of the flhDC operon in a post-transcriptional manner. Activates expression of acrAB, perhaps thereby conferring multidrug resistance. Involved in indole- and bile-mediated regulation of acrAB; binding of bile to RamA may contribute to activation of expression of acrAB. Plays a role in regulating virulence in mice. This chain is Transcriptional regulator RamA, found in Salmonella typhimurium (strain LT2 / SGSC1412 / ATCC 700720).